The chain runs to 867 residues: Pentatricopeptide repeat-containing protein At2g39230, mitochondrial (867 aa).

The transit peptide at Met1–Thr49 directs the protein to the mitochondrion. A disordered region spans residues Ser27 to Glu74. Residues Ser60–Glu72 are compositionally biased toward polar residues. 19 PPR repeats span residues Thr168–Pro202, Phe203–Gly237, Asp238–Pro272, Asp273–Pro307, Ser309–Met343, Ser344–Pro378, Asp379–Pro413, Ser414–Ser444, His448–Pro482, Asn483–Pro517, Asn518–Ala552, Asn553–Met588, Ser589–Pro623, Asn624–Leu658, Asp659–Pro693, Asn694–Cys728, Asp729–Pro763, Asp764–Pro798, and Asn799–His833.

Belongs to the PPR family. P subfamily. In terms of tissue distribution, expressed in lateral organ junctions and shoot apical meristem (SAM).

The protein resides in the mitochondrion. Functionally, involved in lateral organ development and boundary demarcation. The protein is Pentatricopeptide repeat-containing protein At2g39230, mitochondrial (LOJ) of Arabidopsis thaliana (Mouse-ear cress).